Here is a 310-residue protein sequence, read N- to C-terminus: N-acetyl-gamma-glutamyl-phosphate reductase (310 aa).

Cys117 is an active-site residue.

Belongs to the NAGSA dehydrogenase family. Type 2 subfamily.

Its subcellular location is the cytoplasm. The enzyme catalyses N-acetyl-L-glutamate 5-semialdehyde + phosphate + NADP(+) = N-acetyl-L-glutamyl 5-phosphate + NADPH + H(+). Its pathway is amino-acid biosynthesis; L-arginine biosynthesis; N(2)-acetyl-L-ornithine from L-glutamate: step 3/4. Its function is as follows. Catalyzes the NADPH-dependent reduction of N-acetyl-5-glutamyl phosphate to yield N-acetyl-L-glutamate 5-semialdehyde. This chain is N-acetyl-gamma-glutamyl-phosphate reductase, found in Allorhizobium ampelinum (strain ATCC BAA-846 / DSM 112012 / S4) (Agrobacterium vitis (strain S4)).